The chain runs to 78 residues: Sec-independent protein translocase protein TatA (78 aa).

The helical transmembrane segment at 1–21 (MGGISIWQLLIIAVIVVLLFG) threads the bilayer. Residues 47-59 (ESEKKDADFEPKS) are compositionally biased toward basic and acidic residues. Positions 47-78 (ESEKKDADFEPKSLEQQSKQAATESKKDKEQA) are disordered. Residues 60–69 (LEQQSKQAAT) are compositionally biased toward polar residues.

This sequence belongs to the TatA/E family. In terms of assembly, the Tat system comprises two distinct complexes: a TatABC complex, containing multiple copies of TatA, TatB and TatC subunits, and a separate TatA complex, containing only TatA subunits. Substrates initially bind to the TatABC complex, which probably triggers association of the separate TatA complex to form the active translocon.

Its subcellular location is the cell inner membrane. Functionally, part of the twin-arginine translocation (Tat) system that transports large folded proteins containing a characteristic twin-arginine motif in their signal peptide across membranes. TatA could form the protein-conducting channel of the Tat system. The sequence is that of Sec-independent protein translocase protein TatA from Vibrio vulnificus (strain CMCP6).